The sequence spans 1755 residues: Transposon Ty1-MR1 Gag-Pol polyprotein (1755 aa).

3 stretches are compositionally biased toward polar residues: residues 1–31 (MESQQLSQHSPISHGSACASVTSKEVQTTQD), 46–60 (VSTQANSQQPTTPLS), and 137–168 (VGTHLNTPSPESGNSFPDSSSAKSNMTSTNQH). 3 disordered regions span residues 1 to 88 (MESQ…YPQQ), 137 to 174 (VGTHLNTPSPESGNSFPDSSSAKSNMTSTNQHVRPPPI), and 350 to 420 (QQES…IRGS). Residues 299–401 (NNGIPINNKV…NSQSRTARAH (103 aa)) are RNA-binding. Residues 363-372 (SPSDEKKDSR) show a composition bias toward basic and acidic residues. The span at 373–411 (TYTNTTKPKSITRNSQKPNNSQSRTARAHNVSTFNNSPG) shows a compositional bias: polar residues. Asp-461 (for protease activity; shared with dimeric partner) is an active-site residue. The integrase-type zinc finger-like stretch occupies residues 583–640 (NVHTSESTRKYPYPFIHRMLAHANAQTIRYSLKNNTITYFNESDVDWSSAIDYQCPDC). Residues 660-835 (NSYEPFQYLH…AGLDISTLLP (176 aa)) form the Integrase catalytic domain. Positions 671 and 736 each coordinate Mg(2+). Residues 958 to 1172 (AVSPTDSTPP…LGGIGDSNAY (215 aa)) are disordered. Residues 960–969 (SPTDSTPPST) show a composition bias toward low complexity. Residues 1005–1015 (STPQISDIEST) are compositionally biased toward polar residues. Over residues 1038 to 1053 (ESSHASKSKDFRHSDS) the composition is skewed to basic and acidic residues. Polar residues-rich tracts occupy residues 1054–1082 (YSDNETNHTNVPISSTGGTNNKTVPQTSE) and 1095–1106 (SIDTSSSESNSL). The Bipartite nuclear localization signal motif lies at 1178-1212 (KKRSLEDNETEIKVSRDTWNTKNMRSLEPPRSKKR). The Reverse transcriptase Ty1/copia-type domain occupies 1338–1476 (NNYYITQLDI…DILGLEIKYQ (139 aa)). Mg(2+) is bound by residues Asp-1346, Asp-1427, Asp-1428, Asp-1610, Glu-1652, and Asp-1685. The 143-residue stretch at 1610–1752 (DASYGNQPYY…IKTFKLLTNK (143 aa)) folds into the RNase H Ty1/copia-type domain.

The capsid protein forms a homotrimer, from which the VLPs are assembled. The protease is a homodimer, whose active site consists of two apposed aspartic acid residues. Post-translationally, initially, virus-like particles (VLPs) are composed of the structural unprocessed proteins Gag and Gag-Pol, and also contain the host initiator methionine tRNA (tRNA(i)-Met) which serves as a primer for minus-strand DNA synthesis, and a dimer of genomic Ty RNA. Processing of the polyproteins occurs within the particle and proceeds by an ordered pathway, called maturation. First, the protease (PR) is released by autocatalytic cleavage of the Gag-Pol polyprotein yielding capsid protein p45 and a Pol-p154 precursor protein. This cleavage is a prerequisite for subsequent processing of Pol-p154 at the remaining sites to release the mature structural and catalytic proteins. Maturation takes place prior to the RT reaction and is required to produce transposition-competent VLPs.

Its subcellular location is the cytoplasm. The protein resides in the nucleus. It carries out the reaction DNA(n) + a 2'-deoxyribonucleoside 5'-triphosphate = DNA(n+1) + diphosphate. The catalysed reaction is Endonucleolytic cleavage to 5'-phosphomonoester.. Capsid protein (CA) is the structural component of the virus-like particle (VLP), forming the shell that encapsulates the retrotransposons dimeric RNA genome. The particles are assembled from trimer-clustered units and there are holes in the capsid shells that allow for the diffusion of macromolecules. CA also has nucleocapsid-like chaperone activity, promoting primer tRNA(i)-Met annealing to the multipartite primer-binding site (PBS), dimerization of Ty1 RNA and initiation of reverse transcription. Functionally, the aspartyl protease (PR) mediates the proteolytic cleavages of the Gag and Gag-Pol polyproteins after assembly of the VLP. Its function is as follows. Reverse transcriptase/ribonuclease H (RT) is a multifunctional enzyme that catalyzes the conversion of the retro-elements RNA genome into dsDNA within the VLP. The enzyme displays a DNA polymerase activity that can copy either DNA or RNA templates, and a ribonuclease H (RNase H) activity that cleaves the RNA strand of RNA-DNA heteroduplexes during plus-strand synthesis and hydrolyzes RNA primers. The conversion leads to a linear dsDNA copy of the retrotransposon that includes long terminal repeats (LTRs) at both ends. In terms of biological role, integrase (IN) targets the VLP to the nucleus, where a subparticle preintegration complex (PIC) containing at least integrase and the newly synthesized dsDNA copy of the retrotransposon must transit the nuclear membrane. Once in the nucleus, integrase performs the integration of the dsDNA into the host genome. The polypeptide is Transposon Ty1-MR1 Gag-Pol polyprotein (TY1B-MR1) (Saccharomyces cerevisiae (strain ATCC 204508 / S288c) (Baker's yeast)).